The primary structure comprises 492 residues: N-succinylglutamate 5-semialdehyde dehydrogenase (492 aa).

220-225 (GSASTG) contributes to the NAD(+) binding site. Residues E243 and C277 contribute to the active site.

It belongs to the aldehyde dehydrogenase family. AstD subfamily.

It catalyses the reaction N-succinyl-L-glutamate 5-semialdehyde + NAD(+) + H2O = N-succinyl-L-glutamate + NADH + 2 H(+). It functions in the pathway amino-acid degradation; L-arginine degradation via AST pathway; L-glutamate and succinate from L-arginine: step 4/5. Its function is as follows. Catalyzes the NAD-dependent reduction of succinylglutamate semialdehyde into succinylglutamate. This Salmonella paratyphi A (strain AKU_12601) protein is N-succinylglutamate 5-semialdehyde dehydrogenase.